A 372-amino-acid polypeptide reads, in one-letter code: Alanine dehydrogenase 2 (372 aa).

His-95 is an active-site residue. 169 to 199 (KVTIIGGGQAGTNAAKIALGLGADVTILDVN) is an NAD(+) binding site.

The protein belongs to the AlaDH/PNT family.

The catalysed reaction is L-alanine + NAD(+) + H2O = pyruvate + NH4(+) + NADH + H(+). It participates in amino-acid degradation; L-alanine degradation via dehydrogenase pathway; NH(3) and pyruvate from L-alanine: step 1/1. May play a role in cell wall synthesis as L-alanine is an important constituent of the peptidoglycan layer. The chain is Alanine dehydrogenase 2 (ald2) from Staphylococcus aureus (strain Mu50 / ATCC 700699).